Consider the following 574-residue polypeptide: Streptolysin O (574 aa).

Positions 1–36 are cleaved as a signal peptide; the sequence is MKDMSNKKIFKKYSRVAGLLTAALIVGNLVTANADS. Residues 37-52 show a composition bias toward low complexity; the sequence is NKQNTANTETTTTNEQ. Disordered stretches follow at residues 37–64 and 84–111; these read NKQN…TTEK and KEMP…HTEE. Residues 53–64 are compositionally biased toward basic and acidic residues; the sequence is PKPESSELTTEK. 4 beta stranded membrane passes run 263–276, 283–292, 361–370, and 378–390; these read KSQI…NSKI, IDFKSISKGE, SNDVEAAFSA, and KTNG…LENS. Residues 532 to 542 carry the Conserved undecapeptide motif; sequence ECTGLAWEWWR. A Cholesterol binding motif is present at residues 564–565; sequence TL.

This sequence belongs to the cholesterol-dependent cytolysin family. As to quaternary structure, homooligomeric pore complex of 35 to 50 subunits; when inserted in the host membrane.

The protein localises to the secreted. It is found in the host cell membrane. Functionally, a cholesterol-dependent toxin that causes cytolysis by forming pores in cholesterol containing host membranes. After binding to target membranes, the protein undergoes a major conformation change, leading to its insertion in the host membrane and formation of an oligomeric pore complex. Cholesterol is required for binding to host membranes, membrane insertion and pore formation; cholesterol binding is mediated by a Thr-Leu pair in the C-terminus. Can be reversibly inactivated by oxidation. This Streptococcus canis protein is Streptolysin O (slo).